A 501-amino-acid chain; its full sequence is Neuronal acetylcholine receptor subunit beta-2 (501 aa).

The first 25 residues, 1–25, serve as a signal peptide directing secretion; the sequence is MARCSNSMALLFSFGLLWLCSGVLG. The Extracellular segment spans residues 26 to 238; the sequence is TDTEERLVEH…IIRRKPLFYT (213 aa). 2 N-linked (GlcNAc...) asparagine glycosylation sites follow: Asn51 and Asn168. An intrachain disulfide couples Cys155 to Cys169. Residues 239 to 259 form a helical membrane-spanning segment; it reads INLIIPCVLITSLAILVFYLP. The Cytoplasmic portion of the chain corresponds to 260–267; it reads SDCGEKMT. A helical membrane pass occupies residues 268-288; it reads LCISVLLALTVFLLLISKIVP. Over 289–300 the chain is Extracellular; sequence PTSLDVPLVGKY. The chain crosses the membrane as a helical span at residues 301–321; the sequence is LMFTMVLVTFSIVTSVCVLNV. The Cytoplasmic segment spans residues 322–459; the sequence is HHRSPTTHTM…WKYVAMVIDR (138 aa). The helical transmembrane segment at 460–480 threads the bilayer; sequence LFLWIFVFVCVFGTIGMFLQP.

This sequence belongs to the ligand-gated ion channel (TC 1.A.9) family. Acetylcholine receptor (TC 1.A.9.1) subfamily. Beta-2/CHRNB2 sub-subfamily. Neuronal AChR is a heteropentamer composed of two different types of subunits: alpha and beta. CHRNB2/Beta-2 subunit can be combined to CHRNA2/alpha-2, CHRNA3/alpha-3 or CHRNA4/alpha-4, CHRNA5/alpha-5, CHRNA6/alpha-6 and CHRNB3/beta-3 to give rise to functional receptors. CHRNA2:CHRNB2 and CHRNA4:CHRNB2 nAChR complexes exist in two subtypes: LS (low agonist sensitivity) with a (CHRNA2/4)3:(CHRNB2)2 and HS (high agonist sensitivity) with a (CHRNA2/4)2:(CHRNB2)3 stoichiometry; the subtypes differ in their subunit binding interfaces which are involved in ligand binding. Cells produce predominantly an (CHRNA4)3:(CHRNB2)2 nAChR. The stoichiometric form (CHRNA4)2:(CHRNB2)3 expression is selectively up-regulated by nicotine and has lower single channel conductance and calcium permeability. Also part of the stoichiometric forms: (CHRNA4:CHRNB2)2:CHRNB3 or (CHRNA6:CHRNB2)2:CHRNB3. Can form heteropentamers with CHRNA7, mainly found in basal forebrain cholinergic neurons. Interacts with RIC3; which is required for proper folding and assembly. Interacts with LYPD6.

It localises to the synaptic cell membrane. It is found in the cell membrane. The catalysed reaction is K(+)(in) = K(+)(out). The enzyme catalyses Na(+)(in) = Na(+)(out). It catalyses the reaction Ca(2+)(in) = Ca(2+)(out). Its activity is regulated as follows. Activated by a myriad of ligands such as acetylcholine, cytisine, nicotine, choline and epibatidine. Channel potentiation by calcium is stoichiometry-selective, CHRNA4:CHRNB2 nACh receptor is achieved by calcium association with topographically distinct sites framed by anionic residues within the CHRNA4 subunit and between the CHRNA4 and CHRNB2 subunits. Oligomeric amyloid-beta protein 42 activates specifially CHRNA7:CHRNB2 nAchRs. nAChR activity is inhibited by the antagonist alpha-conotoxins BuIA, PnIA, PnIC, GID and MII, small disulfide-constrained peptides from cone snails. Functionally, component of neuronal acetylcholine receptors (nAChRs) that function as pentameric, ligand-gated cation channels with high calcium permeability among other activities. nAChRs are excitatory neurotrasnmitter receptors formed by a collection of nAChR subunits known to mediate synaptic transmission in the nervous system and the neuromuscular junction. Each nAchR subunit confers differential attributes to channel properties, including activation, deactivation and desensitization kinetics, pH sensitivity, cation permeability, and binding to allosteric modulators. CHRNB2 forms heteropentameric neuronal acetylcholine receptors with CHRNA2, CHRNA3, CHRNA4 and CHRNA6, as well as CHRNA5 and CHRNB3 as accesory subunits. Found in two major stoichiometric forms,(CHRNA4)3:(CHRNB2)2 and (CHRNA4)2:(CHRNB2)3, the two stoichiometric forms differ in their unitary conductance, calcium permeability, ACh sensitivity and potentiation by divalent cation. Heteropentameric channels with CHRNA6 and CHRNA4 exhibit high sensitivity to ACh and nicotine and are predominantly expressed in only a few brain areas, including dopaminergic neurons, norepirephrine neurons and cells of the visual system. nAChrs containing CHRNA6 subunits mediate endogenous cholinergic modulation of dopamine and gamma-aminobutyric acid (GABA) release in response to nicotine at nerve terminals. Also forms functional nAChRs with other subunits such as CHRNA7:CHRNB2, mainly expressed in basal forebrain cholinergic neurons. This Mus musculus (Mouse) protein is Neuronal acetylcholine receptor subunit beta-2 (Chrnb2).